Here is a 414-residue protein sequence, read N- to C-terminus: Serine/arginine (SR)-type shuttling mRNA binding protein NPL3 (414 aa).

The segment covering 1–11 (MSEAQETHVEQ) has biased composition (basic and acidic residues). The tract at residues 1–119 (MSEAQETHVE…GRPPMHHRQE (119 aa)) is disordered. A Phosphoserine modification is found at Ser15. Over residues 33-51 (DAPQEPQVPQESAPQESAP) the composition is skewed to low complexity. The segment covering 52–68 (QEPPAPQEQNDVPPPSN) has biased composition (pro residues). Residues 75 to 92 (EESHSVQDYQEAHQHHQP) show a composition bias toward basic and acidic residues. Position 79 is a phosphoserine (Ser79). Over residues 93–105 (PEPQPYYPPPPPG) the composition is skewed to pro residues. RRM domains follow at residues 125-195 (TRLF…YSKL) and 200-275 (YRIT…RDDN). Phosphoserine occurs at positions 182, 212, and 224. The segment at 269 to 299 (TVERDDNPPPIRRSNRGGFRGRGGFRGGFRG) is disordered. Residues 286-299 (GFRGRGGFRGGFRG) show a composition bias toward gly residues. A dimethylated arginine mark is found at Arg288, Arg290, Arg294, and Arg298. The residue at position 302 (Arg302) is an Omega-N-methylarginine. Arg307 and Arg314 each carry dimethylated arginine; alternate. Arg307 and Arg314 each carry omega-N-methylarginine; alternate. Residues Arg321, Arg329, Arg337, and Arg344 each carry the omega-N-methylarginine modification. The disordered stretch occupies residues 343–414 (SRGGYDSPRG…DAPRERSPTR (72 aa)). Residues 346–360 (GYDSPRGGYDSPRGG) are compositionally biased toward low complexity. Position 351 is a dimethylated arginine; alternate (Arg351). The residue at position 351 (Arg351) is an Omega-N-methylarginine; alternate. A Phosphoserine modification is found at Ser356. Dimethylated arginine; alternate is present on residues Arg358, Arg363, Arg377, and Arg384. Omega-N-methylarginine; alternate occurs at positions 358, 363, 377, and 384. Residues 379–389 (SYGGSRGGYDG) are compositionally biased toward gly residues. Arg391 carries the post-translational modification Omega-N-methylarginine. Over residues 399-414 (DAYRTRDAPRERSPTR) the composition is skewed to basic and acidic residues.

The protein belongs to the RRM GAR family. In terms of assembly, interacts with RRP6. Methylated by HMT1. The methylation is required for nuclear export.

Its subcellular location is the cytoplasm. The protein resides in the nucleus. It is found in the stress granule. Involved in mRNA processing and export. Required for efficient splicing of a large set of pre-mRNAs by efficient co-transcriptional recruitment of the splicing machinery. Remains associated with the mRNP during early steps of translation elongation. The protein is Serine/arginine (SR)-type shuttling mRNA binding protein NPL3 of Saccharomyces cerevisiae (strain ATCC 204508 / S288c) (Baker's yeast).